The chain runs to 150 residues: Cytochrome c-type biogenesis protein CcmE (150 aa).

Over 1-7 the chain is Cytoplasmic; the sequence is MTRKQKR. Residues 8–28 form a helical; Signal-anchor for type II membrane protein membrane-spanning segment; that stretch reads LAIIGGGVGFLTAAVLLVMFA. The Periplasmic segment spans residues 29–150; it reads FSQAVAYFYV…VTLGGKENIQ (122 aa). Residues His-123 and Tyr-127 each contribute to the heme site.

The protein belongs to the CcmE/CycJ family.

Its subcellular location is the cell inner membrane. Functionally, heme chaperone required for the biogenesis of c-type cytochromes. Transiently binds heme delivered by CcmC and transfers the heme to apo-cytochromes in a process facilitated by CcmF and CcmH. This Sinorhizobium fredii (strain NBRC 101917 / NGR234) protein is Cytochrome c-type biogenesis protein CcmE.